Here is a 235-residue protein sequence, read N- to C-terminus: Exotoxin type C (235 aa).

Residues 1–27 (MKKINIIKIVFIITVILISTISPIIKS) form the signal peptide. Zn(2+)-binding residues include His-194, His-228, and Asp-230.

The protein belongs to the staphylococcal/streptococcal toxin family.

Functionally, superantigen that acts as a causative agent of the symptoms associated with scarlet fever. Has been associated with streptococcal toxic shock-like disease and may play a role in the early events of rheumatic fever. Superantigens cross-link major histocompatibility complex (MHC) class II and T-cell receptor (TCR) molecules, resulting in an overstimulation of T-cells associated with a massive release of pyrogenic and inflammatory cytokines. The polypeptide is Exotoxin type C (Streptococcus pyogenes serotype M18 (strain MGAS8232)).